The following is a 493-amino-acid chain: Leucine-rich repeat-containing protein 14 (493 aa).

The LRR 1; degenerate repeat unit spans residues 111–146; that stretch reads KHTLRVLDMTGLLDDGVEQDPGTMSMWDCTAAVART. An LRR 2; degenerate repeat occupies 194–218; it reads RLCCRDLRAEDLPMRNTVALLQLLD. An LRR 3; degenerate repeat occupies 219-246; the sequence is AGCLRRIDLRFNNLGLRGLSVIIPHVAR. The LRR 4; degenerate repeat unit spans residues 247–282; that stretch reads FQHLASLRLHYVHGDSRQPSVDGEDNFRYFLAQMGR. LRR repeat units lie at residues 283-307, 308-339, 340-360, 364-391, and 392-416; these read FICL…LSTL, QRPL…AHLK, KLDL…QGLL, AATL…TLTR, and CASL…LLRD.

This sequence belongs to the PRAME family. LRRC14 subfamily. Interacts with IKBKB; disrupts IKBKB-IKBKG interaction preventing I-kappa-B-kinase (IKK) core complex formation and leading to a decrease of IKBKB phosphorylation and NF-kappaB activation. Interacts with CHUK.

It localises to the cytoplasm. Functionally, negatively regulates Toll-like receptor-mediated NF-kappa-B signaling by disrupting IKK core complex formation through interaction with IKBKB. This is Leucine-rich repeat-containing protein 14 from Rattus norvegicus (Rat).